Consider the following 319-residue polypeptide: Replication factor C small subunit 2 (319 aa).

Residue 44–51 (GPPGTGKT) coordinates ATP.

The protein belongs to the activator 1 small subunits family. RfcS subfamily. Heteromultimer composed of small subunits (RfcS) and large subunits (RfcL).

In terms of biological role, part of the RFC clamp loader complex which loads the PCNA sliding clamp onto DNA. The protein is Replication factor C small subunit 2 of Pyrobaculum aerophilum (strain ATCC 51768 / DSM 7523 / JCM 9630 / CIP 104966 / NBRC 100827 / IM2).